A 755-amino-acid polypeptide reads, in one-letter code: Cellulose synthase-like protein B4 (755 aa).

2 consecutive transmembrane segments (helical) span residues 24–44 (AVDLTILGLLLSLLLYRILHV) and 49–69 (TVWIVAFLCETCFTFVWLLIT). Residues D136 and D461 contribute to the active site. 6 helical membrane passes run 533–556 (AYLYVFSWGLRSIPELFYCLLPAY), 569–589 (VYLGIIITLVGIHCLYTLWEF), 615–635 (LFSVLDVILKLLGISKTVFIV), 674–694 (FLPGTFIVLVNLAALAGCLVG), 702–722 (GSGLAEACGCILVVILFLPFL), and 733–753 (IPFSTLSKAAFLAALFVVLSV).

Belongs to the glycosyltransferase 2 family. Plant cellulose synthase-like B subfamily.

The protein localises to the golgi apparatus membrane. In terms of biological role, thought to be a Golgi-localized beta-glycan synthase that polymerize the backbones of noncellulosic polysaccharides (hemicelluloses) of plant cell wall. In Arabidopsis thaliana (Mouse-ear cress), this protein is Cellulose synthase-like protein B4 (CSLB4).